A 103-amino-acid chain; its full sequence is Small ribosomal subunit protein uS10 (103 aa).

The protein belongs to the universal ribosomal protein uS10 family. As to quaternary structure, part of the 30S ribosomal subunit.

In terms of biological role, involved in the binding of tRNA to the ribosomes. In Chlorobium luteolum (strain DSM 273 / BCRC 81028 / 2530) (Pelodictyon luteolum), this protein is Small ribosomal subunit protein uS10.